A 252-amino-acid chain; its full sequence is Tabinhibitin 9 (252 aa).

Residues 1-23 form the signal peptide; sequence MTSNLYYVLISPYSLAYMVQYRS. A Cell attachment site motif is present at residues 32–34; that stretch reads RGD. The SCP domain maps to 63–207; it reads YIRSTMCEIM…KARAFFTCNF (145 aa).

The protein belongs to the CRISP family. As to expression, expressed in salivary glands.

The protein localises to the secreted. Its function is as follows. Inhibits platelet aggregation induced by all agonists tested (ADP, arachidonic acid, the thromboxane A2 analog U46619, thrombin, and snake venom snaclecs (TMVA that activates platelet through GPIB, and stejnulxin that specifically acts through GPVI (GP6))). May act by competing with fibrinogen for binding to glycoprotein IIb/IIIa (ITGA2B/ITGB3). This chain is Tabinhibitin 9, found in Tabanus yao (Horsefly).